Consider the following 1049-residue polypeptide: Toll-like receptor 7 (1049 aa).

Residues 1–26 (MVFPMWTLKRQILILFNIILISKLLG) form the signal peptide. The Extracellular portion of the chain corresponds to 27–839 (ARWFPKTLPC…LYTCELDLTN (813 aa)). 6 LRR repeats span residues 43-64 (PKNHVIVDCTDKHLTEIPGGIP), 65-87 (TNTTNLTLTINHIPDISPASFHR), 110-126 (NMCIKRLQIKPRSFSGL), 127-149 (TYLKSLYLDGNQLLEIPQGLPPS), 151-170 (QLLSLEANNIFSIRKENLTE), and 171-195 (LANIEILYLGQNCYYRNPCYVSYSI). Residues Asn-66 and Asn-69 are each glycosylated (N-linked (GlcNAc...) asparagine). N-linked (GlcNAc...) asparagine glycosylation is present at Asn-167. N-linked (GlcNAc...) asparagine glycosylation is found at Asn-202 and Asn-215. 9 LRR repeats span residues 203-226 (LTKLKVLSLKDNNVTAVPTVLPST), 228-247 (TELYLYNNMIAKIQEDDFNN), 248-275 (LNQLQILDLSGNCPRCYNAPFPCAPCKN), 289-312 (LTELKVLRLHSNSLQHVPPRWFKN), 314-337 (NKLQELDLSQNFLAKEIGDAKFLH), 339-368 (LPSLIQLDLSFNFELQVYRASMNLSQAFSS), 369-392 (LKSLKILRIRGYVFKELKSFNLSP), 396-419 (LQNLEVLDLGTNFIKIANLSMFKQ), and 421-443 (KRLKVIDLSVNKISPSGDSSEVG). An N-linked (GlcNAc...) asparagine glycan is attached at Asn-361. Residue Asn-413 is glycosylated (N-linked (GlcNAc...) asparagine). Asn-488 carries N-linked (GlcNAc...) asparagine glycosylation. 4 LRR repeats span residues 492-515 (YKYGQTLDLSKNSIFFVKSSDFQH), 516-540 (LSFLKCLNLSGNLISQTLNGSEFQP), 541-564 (LAELRYLDFSNNRLDLLHSTAFEE), and 566-588 (HKLEVLDISSNSHYFQSEGITHM). N-linked (GlcNAc...) asparagine glycans are attached at residues Asn-523 and Asn-534. N-linked (GlcNAc...) asparagine glycosylation occurs at Asn-590. LRR repeat units follow at residues 595-618 (LKVLQKLMMNDNDISSSTSRTMES), 619-644 (ESLRTLEFRGNHLDVLWREGDNRYLQ), 649-672 (LLKLEELDISKNSLSFLPSGVFDG), 674-697 (PPNLKNLSLAKNGLKSFSWKKLQC), 698-721 (LKNLETLDLSHNQLTTVPERLSNC), 723-745 (RSLKNLILKNNQIRSLTKYFLQD), 746-769 (AFQLRYLDLSSNKIQMIQKTSFPE), and 772-795 (LNNLKMLLLHHNRFLCTCDAVWFV). 2 N-linked (GlcNAc...) asparagine glycosylation sites follow: Asn-679 and Asn-720. Residue Asn-799 is glycosylated (N-linked (GlcNAc...) asparagine). Residues 840–860 (LILFSLSISVSLFLMVMMTAS) traverse the membrane as a helical segment. Over 861–1049 (HLYFWDVWYI…AYSQVFKETV (189 aa)) the chain is Cytoplasmic. The region spanning 889 to 1033 (CCYDAFIVYD…YFWQCLKNAL (145 aa)) is the TIR domain.

The protein belongs to the Toll-like receptor family. As to quaternary structure, homodimer. Interacts with MYD88 via their respective TIR domains. Interacts with UNC93B1. Interacts with SMPDL3B. In terms of tissue distribution, detected in brain, placenta, spleen, stomach, small intestine, lung and in plasmacytoid pre-dendritic cells. Expressed in peripheral mononuclear blood cells.

The protein localises to the endoplasmic reticulum membrane. Its subcellular location is the endosome. It is found in the lysosome. It localises to the cytoplasmic vesicle. The protein resides in the phagosome. Activated by guanosine analogs including deoxyguanosine, 7-thia-8-oxoguanosine or 7-deazaguanosine in a RNA-independent manner. Activated by imiquimod. Its function is as follows. Endosomal receptor that plays a key role in innate and adaptive immunity. Controls host immune response against pathogens through recognition of uridine-containing single strand RNAs (ssRNAs) of viral origin or guanosine analogs. Upon binding to agonists, undergoes dimerization that brings TIR domains from the two molecules into direct contact, leading to the recruitment of TIR-containing downstream adapter MYD88 through homotypic interaction. In turn, the Myddosome signaling complex is formed involving IRAK4, IRAK1, TRAF6, TRAF3 leading to activation of downstream transcription factors NF-kappa-B and IRF7 to induce pro-inflammatory cytokines and interferons, respectively. In plasmacytoid dendritic cells, RNASET2 endonuclease cooperates with PLD3 or PLD4 5'-&gt;3' exonucleases to process RNA and release 2',3'-cyclic guanosine monophosphate (2',3'-cGMP) and cytidine-rich RNA fragments that occupy TLR7 ligand-binding pockets and trigger a signaling-competent state. The protein is Toll-like receptor 7 of Homo sapiens (Human).